The primary structure comprises 392 residues: Zinc finger protein CONSTANS-LIKE 7 (392 aa).

The Zn(2+) site is built by cysteine 22, cysteine 25, cysteine 46, and histidine 51. The segment at 22 to 65 (CDACMKRSRASWYCPADDAFLCQSCDASIHSANHLAKRHERVRL) adopts a B box-type; atypical zinc-finger fold. A coiled-coil region spans residues 226 to 254 (KEENKVGFEINCKDLKRVKDEDEEEEEAK). 2 disordered regions span residues 246–271 (EDEEEEEAKCENGGSKDSDREASNDK) and 326–346 (SDGSVTRQQGRDGGGSDGERE). Positions 259-271 (GSKDSDREASNDK) are enriched in basic and acidic residues. One can recognise a CCT domain in the interval 345 to 387 (REARVLRYKEKRRTRLFSKKIRYEVRKLNAEQRPRIKGRFVKR).

This sequence belongs to the CONSTANS family.

Its subcellular location is the nucleus. The polypeptide is Zinc finger protein CONSTANS-LIKE 7 (COL7) (Arabidopsis thaliana (Mouse-ear cress)).